Consider the following 156-residue polypeptide: Ecotin (156 aa).

Positions Met1–Ala19 are cleaved as a signal peptide. A disulfide bond links Cys65 and Cys102.

The protein belongs to the protease inhibitor I11 (ecotin) family. Homodimer.

It is found in the periplasm. General inhibitor of family S1 serine proteases. The sequence is that of Ecotin from Pseudomonas aeruginosa (strain ATCC 15692 / DSM 22644 / CIP 104116 / JCM 14847 / LMG 12228 / 1C / PRS 101 / PAO1).